The primary structure comprises 448 residues: Probable sodium-coupled neutral amino acid transporter 6 (448 aa).

2 stretches are compositionally biased toward polar residues: residues 1 to 12 and 26 to 36; these read MQASDSSINTLD and LLANSPQRRSS. A disordered region spans residues 1 to 36; it reads MQASDSSINTLDGHQVSAGRDESTPLLANSPQRRSS. Transmembrane regions (helical) follow at residues 40 to 60, 69 to 89, 117 to 137, 164 to 184, and 185 to 205; these read SFGF…ILGL, ILGF…SIHL, LVAC…LFII, LLII…KIGF, and LGYT…VIVI. An intrachain disulfide couples C212 to C232. Residues N218 and N228 are each glycosylated (N-linked (GlcNAc...) asparagine). A run of 6 helical transmembrane segments spans residues 244–264, 281–301, 321–341, 365–385, 388–408, and 425–445; these read AFAL…LPIY, VGIA…YLTF, VLII…VPLI, ILVT…VPDM, VFGV…PGLF, and ACGL…LIIM.

This sequence belongs to the amino acid/polyamine transporter 2 family.

The protein resides in the cell membrane. Its function is as follows. Probable sodium-dependent amino acid/proton antiporter, could be a neuronal transporter for glutamate. The polypeptide is Probable sodium-coupled neutral amino acid transporter 6 (slc38a6) (Xenopus tropicalis (Western clawed frog)).